The chain runs to 907 residues: Lateral signaling target protein 2 homolog (907 aa).

Disordered stretches follow at residues 339–395 (SSDN…DPAN), 463–604 (LTDS…SGDA), 662–688 (NSSP…PDPA), 716–756 (EVNA…SENG), and 770–834 (GSGG…EERR). Polar residues predominate over residues 351-361 (DISSFYTSNNR). Residues 367–393 (EPNEDDDVSESNDEDEDEGEEVDEDDP) are compositionally biased toward acidic residues. Composition is skewed to polar residues over residues 463 to 475 (LTDS…NPSL) and 486 to 495 (PVTSSHPIAQ). Over residues 501–516 (SEEEGEVDEYDEDDSE) the composition is skewed to acidic residues. The segment covering 525-549 (HHTKHQRRHRHHHHHHRKHYSKHRS) has biased composition (basic residues). Positions 550 to 565 (SAAGSAGTSGTTCSAA) are enriched in low complexity. Residues 568-580 (QISSCDTSPSSGG) are compositionally biased toward polar residues. Over residues 592 to 602 (GSSGNSSGGSG) the composition is skewed to gly residues. Polar residues predominate over residues 742–751 (APRTMMTTAA). Residues 777–793 (GSSRSSQERSVSLSETS) are compositionally biased toward low complexity. Residues 816-826 (PKSVQSEQSGQ) are compositionally biased toward polar residues. The FYVE-type zinc-finger motif lies at 845–905 (DGDAPRCMAC…VCRECFVREV (61 aa)). Residues cysteine 851, cysteine 854, cysteine 867, cysteine 870, cysteine 875, cysteine 878, cysteine 897, and cysteine 900 each contribute to the Zn(2+) site.

It belongs to the lst-2 family.

In terms of biological role, negative regulator of epidermal growth factor receptor (EGFR) signaling. The chain is Lateral signaling target protein 2 homolog from Culex quinquefasciatus (Southern house mosquito).